Reading from the N-terminus, the 422-residue chain is MSEDKPHQNLAVIGHVDHGKSTMVGRLLFETGSVPEHVIEQYREEAEEKGKGGFEFAYVMDNLAEERERGVTIDIAHQEFDTDEYYFTIVDCPGHRDFVKNMITGASQADNAVLVVAADDGVQPQTQEHVFLARTLGIDELIIAVNKMDLVDYDENKYKAVVDEVNQLLEQVRFNTEDAKFIPTSAFEGDNVSEASENTSWYDGPSLLEALNDLPEPQPPTDAPLRLPIQDVYTISGIGTVPVGRVETGILNTGDNVSFQPSDVSGEVKTVEMHHEEVPKAEPGDNVGFNVRGVGKDDIRRGDVCGPADDPPSVAETFQAQVVVMQHPSVITAGYTPVFHAHTAQVACTIESIDKKIDPSSGEVAEENPDFIQSGDAAVVTVRPQKPLSIESSNEIPELGSFAIRDMGQTVAAGKVLSVNER.

The region spanning 5–221 is the tr-type G domain; that stretch reads KPHQNLAVIG…NDLPEPQPPT (217 aa). Residues 14 to 21 form a G1 region; it reads GHVDHGKS. 14 to 21 is a GTP binding site; the sequence is GHVDHGKS. Position 21 (Ser-21) interacts with Mg(2+). The interval 70 to 74 is G2; that stretch reads GVTID. The segment at 91-94 is G3; sequence DCPG. Residues 91–95 and 146–149 each bind GTP; these read DCPGH and NKMD. The segment at 146-149 is G4; the sequence is NKMD. The tract at residues 185 to 187 is G5; sequence SAF.

This sequence belongs to the TRAFAC class translation factor GTPase superfamily. Classic translation factor GTPase family. EF-Tu/EF-1A subfamily.

The protein localises to the cytoplasm. The catalysed reaction is GTP + H2O = GDP + phosphate + H(+). Its function is as follows. GTP hydrolase that promotes the GTP-dependent binding of aminoacyl-tRNA to the A-site of ribosomes during protein biosynthesis. This chain is Elongation factor 1-alpha, found in Natronomonas pharaonis (strain ATCC 35678 / DSM 2160 / CIP 103997 / JCM 8858 / NBRC 14720 / NCIMB 2260 / Gabara) (Halobacterium pharaonis).